The sequence spans 204 residues: phospholipase A2 inhibitor and Ly6/PLAUR domain-containing protein (204 aa).

The first 26 residues, methionine 1–proline 26, serve as a signal peptide directing secretion. The region spanning leucine 27–threonine 117 is the UPAR/Ly6 domain. 7 disulfide bridges follow: cysteine 29–cysteine 53, cysteine 32–cysteine 39, cysteine 46–cysteine 74, cysteine 80–cysteine 101, cysteine 102–cysteine 107, cysteine 126–cysteine 151, and cysteine 144–cysteine 172.

This sequence belongs to the CNF-like-inhibitor family.

It localises to the secreted. The polypeptide is phospholipase A2 inhibitor and Ly6/PLAUR domain-containing protein (PINLYP) (Homo sapiens (Human)).